We begin with the raw amino-acid sequence, 88 residues long: Cell division topological specificity factor (88 aa).

Belongs to the MinE family.

Its function is as follows. Prevents the cell division inhibition by proteins MinC and MinD at internal division sites while permitting inhibition at polar sites. This ensures cell division at the proper site by restricting the formation of a division septum at the midpoint of the long axis of the cell. The chain is Cell division topological specificity factor from Aeromonas salmonicida (strain A449).